The sequence spans 87 residues: Insulin-related peptide 1 (87 aa).

Positions 1–19 (MKSFMVFVLIFACFSCYYA) are cleaved as a signal peptide. Positions 20 to 44 (QESTNFYCGRTLSRALAVLCYGAES) are excised as a propeptide. Position 64 is an arginine amide (Arg64). Residues 68–87 (GPVDECCEKACSIQELMTYC) constitute a propeptide that is removed on maturation.

The protein belongs to the insulin family. In terms of tissue distribution, DAGWWIPQHGHHALAGVR-amide: Expressed in corpora cardiaca (CC), corpora allata (CA), antennal lobe (AL) and gnathal ganglion (GNG) (at protein level). Expression in CC and CA detected in most animals, in AL and GNG in few animals (at protein level).

It is found in the secreted. The chain is Insulin-related peptide 1 from Agrotis ipsilon (Black cutworm moth).